Reading from the N-terminus, the 396-residue chain is Deoxyguanosinetriphosphate triphosphohydrolase-like protein (396 aa).

The 143-residue stretch at 69-211 (RLSHSLEVSQ…AALADDIAYN (143 aa)) folds into the HD domain.

The protein belongs to the dGTPase family. Type 2 subfamily.

This is Deoxyguanosinetriphosphate triphosphohydrolase-like protein from Parvibaculum lavamentivorans (strain DS-1 / DSM 13023 / NCIMB 13966).